Here is a 715-residue protein sequence, read N- to C-terminus: Fatty acid oxidation complex subunit alpha (715 aa).

An enoyl-CoA hydratase/isomerase region spans residues 1–190 (MIYEGKAITV…KVGAVDAVVA (190 aa)). Asp297 provides a ligand contact to substrate. The segment at 312 to 715 (KDVKQAAVLG…MAKNGQSFFG (404 aa)) is 3-hydroxyacyl-CoA dehydrogenase. Residues Met325, Asp344, 401-403 (VVE), Lys408, and Ser430 contribute to the NAD(+) site. His451 acts as the For 3-hydroxyacyl-CoA dehydrogenase activity in catalysis. Asn454 serves as a coordination point for NAD(+). 2 residues coordinate substrate: Asn501 and Tyr660.

The protein in the N-terminal section; belongs to the enoyl-CoA hydratase/isomerase family. It in the C-terminal section; belongs to the 3-hydroxyacyl-CoA dehydrogenase family. In terms of assembly, heterotetramer of two alpha chains (FadB) and two beta chains (FadA).

It carries out the reaction a (3S)-3-hydroxyacyl-CoA + NAD(+) = a 3-oxoacyl-CoA + NADH + H(+). It catalyses the reaction a (3S)-3-hydroxyacyl-CoA = a (2E)-enoyl-CoA + H2O. The enzyme catalyses a 4-saturated-(3S)-3-hydroxyacyl-CoA = a (3E)-enoyl-CoA + H2O. The catalysed reaction is (3S)-3-hydroxybutanoyl-CoA = (3R)-3-hydroxybutanoyl-CoA. It carries out the reaction a (3Z)-enoyl-CoA = a 4-saturated (2E)-enoyl-CoA. It catalyses the reaction a (3E)-enoyl-CoA = a 4-saturated (2E)-enoyl-CoA. The protein operates within lipid metabolism; fatty acid beta-oxidation. In terms of biological role, involved in the aerobic and anaerobic degradation of long-chain fatty acids via beta-oxidation cycle. Catalyzes the formation of 3-oxoacyl-CoA from enoyl-CoA via L-3-hydroxyacyl-CoA. It can also use D-3-hydroxyacyl-CoA and cis-3-enoyl-CoA as substrate. In Pseudomonas fluorescens (strain Pf0-1), this protein is Fatty acid oxidation complex subunit alpha.